The sequence spans 157 residues: SsrA-binding protein (157 aa).

The disordered stretch occupies residues 132–157; the sequence is VHDKRQAQKDKDWAREKDRLFKKAYK. Residues 135–157 show a composition bias toward basic and acidic residues; the sequence is KRQAQKDKDWAREKDRLFKKAYK.

It belongs to the SmpB family.

Its subcellular location is the cytoplasm. Functionally, required for rescue of stalled ribosomes mediated by trans-translation. Binds to transfer-messenger RNA (tmRNA), required for stable association of tmRNA with ribosomes. tmRNA and SmpB together mimic tRNA shape, replacing the anticodon stem-loop with SmpB. tmRNA is encoded by the ssrA gene; the 2 termini fold to resemble tRNA(Ala) and it encodes a 'tag peptide', a short internal open reading frame. During trans-translation Ala-aminoacylated tmRNA acts like a tRNA, entering the A-site of stalled ribosomes, displacing the stalled mRNA. The ribosome then switches to translate the ORF on the tmRNA; the nascent peptide is terminated with the 'tag peptide' encoded by the tmRNA and targeted for degradation. The ribosome is freed to recommence translation, which seems to be the essential function of trans-translation. This is SsrA-binding protein from Francisella tularensis subsp. novicida (strain U112).